The sequence spans 542 residues: Chromatin structure-remodeling complex subunit rsc4 (542 aa).

The 111-residue stretch at 6–116 folds into the Bromo 1 domain; sequence HNAPFDKTKF…NTANSLESKD (111 aa). 2 disordered regions span residues 114 to 139 and 246 to 327; these read SKDGTLNEEENEEMESSINEEHKPGT and ISSF…PIPE. Over residues 119–128 the composition is skewed to acidic residues; it reads LNEEENEEME. The 111-residue stretch at 139 to 249 folds into the Bromo 2 domain; the sequence is TNEIDVPKVI…QLSSSLISSF (111 aa). Positions 252-266 are enriched in basic and acidic residues; that stretch reads QPKEHSPATSKHEPE. Residues Ser257, Ser271, Ser287, and Ser313 each carry the phosphoserine modification. The span at 268–280 shows a compositional bias: low complexity; sequence TPASPTPSVSAST. Residues 286–298 show a composition bias toward polar residues; sequence TSVAPSFITSDQA. Residues 304–322 are compositionally biased toward basic and acidic residues; it reads LKSEEAHVESFSKESEKDQ.

Component of the RSC complex composed of at least arp9, arp42, rsc1, rsc4, rsc7, rsc9, rsc58, sfh1, snf21, ssr1, ssr2, ssr3 and ssr4. The complex interacts with histone and histone variant components of centromeric chromatin.

It localises to the nucleus. Functionally, component of the chromatin structure remodeling complex (RSC), which is involved in transcription regulation and nucleosome positioning. Controls particularly membrane and organelle development genes. This chain is Chromatin structure-remodeling complex subunit rsc4 (rsc4), found in Schizosaccharomyces pombe (strain 972 / ATCC 24843) (Fission yeast).